The following is a 319-amino-acid chain: Ferrochelatase (319 aa).

H193 and E274 together coordinate Fe cation.

This sequence belongs to the ferrochelatase family.

The protein localises to the cytoplasm. The enzyme catalyses heme b + 2 H(+) = protoporphyrin IX + Fe(2+). The protein operates within porphyrin-containing compound metabolism; protoheme biosynthesis; protoheme from protoporphyrin-IX: step 1/1. Catalyzes the ferrous insertion into protoporphyrin IX. This is Ferrochelatase from Actinobacillus pleuropneumoniae serotype 5b (strain L20).